The chain runs to 148 residues: Probable TtuB-protein conjugate cleaving protease (148 aa).

The 127-residue stretch at 22-148 (HGLVLYVPRG…EGQEVALVVL (127 aa)) folds into the MPN domain. The active-site Proton donor/acceptor is the glutamate 47. Residues histidine 101, histidine 103, and aspartate 114 each coordinate Zn(2+). Positions 101–114 (HSHPKGPALPSPRD) match the JAMM motif motif.

This sequence belongs to the peptidase M67B family. Requires Zn(2+) as cofactor.

Functionally, probable metalloprotease that cleaves the ubiquitin-like modifier protein TtuB from protein conjugates, hydrolyzing the isopeptide bond between a lysine residue of the target protein and the C-terminal glycine of the modifier protein. Does not seem to work for all the TtuB conjugates. In Thermus thermophilus (strain ATCC BAA-163 / DSM 7039 / HB27), this protein is Probable TtuB-protein conjugate cleaving protease.